Reading from the N-terminus, the 145-residue chain is Peptide methionine sulfoxide reductase MsrB (145 aa).

One can recognise a MsrB domain in the interval serine 4–tyrosine 127. Catalysis depends on cysteine 116, which acts as the Nucleophile.

It belongs to the MsrB Met sulfoxide reductase family.

It carries out the reaction L-methionyl-[protein] + [thioredoxin]-disulfide + H2O = L-methionyl-(R)-S-oxide-[protein] + [thioredoxin]-dithiol. This chain is Peptide methionine sulfoxide reductase MsrB, found in Streptococcus pyogenes serotype M3 (strain ATCC BAA-595 / MGAS315).